Here is a 500-residue protein sequence, read N- to C-terminus: Bifunctional protein GlmU (500 aa).

Residues 1–242 form a pyrophosphorylase region; that stretch reads MPVQTAVVVL…SAKVAGANDR (242 aa). UDP-N-acetyl-alpha-D-glucosamine is bound by residues 10–13, Lys-24, Gln-81, and 86–87; these read LAAG and GT. Asp-112 is a binding site for Mg(2+). UDP-N-acetyl-alpha-D-glucosamine contacts are provided by Gly-151, Glu-167, Asn-182, and Asn-240. Residue Asn-240 participates in Mg(2+) binding. The tract at residues 243–263 is linker; the sequence is VQLSRLAAELNRRTVENWMRA. An N-acetyltransferase region spans residues 264–500; that stretch reads GVTVVDPSTT…KQDLKDGIEQ (237 aa). UDP-N-acetyl-alpha-D-glucosamine is bound by residues Arg-345 and Lys-363. His-375 functions as the Proton acceptor in the catalytic mechanism. Tyr-378 and Asn-389 together coordinate UDP-N-acetyl-alpha-D-glucosamine. Acetyl-CoA is bound by residues Ala-392, 398 to 399, Ser-417, and Ala-435; that span reads NY. Residues 459–500 form a disordered region; sequence DGWVQRNRPGTPAAEAASAAGPHHSSDLHETEKQDLKDGIEQ. A compositionally biased stretch (basic and acidic residues) spans 482–500; that stretch reads HSSDLHETEKQDLKDGIEQ.

This sequence in the N-terminal section; belongs to the N-acetylglucosamine-1-phosphate uridyltransferase family. It in the C-terminal section; belongs to the transferase hexapeptide repeat family. In terms of assembly, homotrimer. The cofactor is Mg(2+).

Its subcellular location is the cytoplasm. The catalysed reaction is alpha-D-glucosamine 1-phosphate + acetyl-CoA = N-acetyl-alpha-D-glucosamine 1-phosphate + CoA + H(+). It carries out the reaction N-acetyl-alpha-D-glucosamine 1-phosphate + UTP + H(+) = UDP-N-acetyl-alpha-D-glucosamine + diphosphate. It participates in nucleotide-sugar biosynthesis; UDP-N-acetyl-alpha-D-glucosamine biosynthesis; N-acetyl-alpha-D-glucosamine 1-phosphate from alpha-D-glucosamine 6-phosphate (route II): step 2/2. Its pathway is nucleotide-sugar biosynthesis; UDP-N-acetyl-alpha-D-glucosamine biosynthesis; UDP-N-acetyl-alpha-D-glucosamine from N-acetyl-alpha-D-glucosamine 1-phosphate: step 1/1. The protein operates within bacterial outer membrane biogenesis; LPS lipid A biosynthesis. Catalyzes the last two sequential reactions in the de novo biosynthetic pathway for UDP-N-acetylglucosamine (UDP-GlcNAc). The C-terminal domain catalyzes the transfer of acetyl group from acetyl coenzyme A to glucosamine-1-phosphate (GlcN-1-P) to produce N-acetylglucosamine-1-phosphate (GlcNAc-1-P), which is converted into UDP-GlcNAc by the transfer of uridine 5-monophosphate (from uridine 5-triphosphate), a reaction catalyzed by the N-terminal domain. The chain is Bifunctional protein GlmU from Rhodococcus opacus (strain B4).